The primary structure comprises 252 residues: tRNA (guanine-N(7)-)-methyltransferase (252 aa).

Residues glutamate 51, aspartate 76, asparagine 103, and aspartate 125 each contribute to the S-adenosyl-L-methionine site. Aspartate 125 is a catalytic residue. Substrate-binding positions include lysine 129, aspartate 159, and 199–202 (TYYE).

This sequence belongs to the class I-like SAM-binding methyltransferase superfamily. TrmB family.

The catalysed reaction is guanosine(46) in tRNA + S-adenosyl-L-methionine = N(7)-methylguanosine(46) in tRNA + S-adenosyl-L-homocysteine. It participates in tRNA modification; N(7)-methylguanine-tRNA biosynthesis. In terms of biological role, catalyzes the formation of N(7)-methylguanine at position 46 (m7G46) in tRNA. The sequence is that of tRNA (guanine-N(7)-)-methyltransferase from Bacteroides thetaiotaomicron (strain ATCC 29148 / DSM 2079 / JCM 5827 / CCUG 10774 / NCTC 10582 / VPI-5482 / E50).